We begin with the raw amino-acid sequence, 790 residues long: Exocyst complex component SEC15A (790 aa).

Residues 49–70 (LVHQLKNVARKKEAEIEDLCKT) are a coiled coil.

Belongs to the SEC15 family. In terms of assembly, the exocyst complex is composed of SEC3, SEC5, SEC6, SEC8, SEC10, EXO70A1 and EXO84B.

Its subcellular location is the cytoplasm. The protein localises to the cytosol. Component of the exocyst complex involved in the docking of exocytic vesicles with fusion sites on the plasma membrane during regulated or polarized secretion. Involved in polarized cell growth and organ morphogenesis. During cytokinesis, involved in cell plate initiation, cell plate maturation and formation of new primary cell wall. In Arabidopsis thaliana (Mouse-ear cress), this protein is Exocyst complex component SEC15A (SEC15A).